The chain runs to 638 residues: UvrABC system protein C (638 aa).

The GIY-YIG domain occupies 20-97; that stretch reads ECAGVYQMFD…IKKFQPKFNI (78 aa). Residues 209–244 enclose the UVR domain; that stretch reads KELQENLSKKMEELSSHMYFEEAAEIRDRIKALSYV.

The protein belongs to the UvrC family. In terms of assembly, interacts with UvrB in an incision complex.

Its subcellular location is the cytoplasm. The UvrABC repair system catalyzes the recognition and processing of DNA lesions. UvrC both incises the 5' and 3' sides of the lesion. The N-terminal half is responsible for the 3' incision and the C-terminal half is responsible for the 5' incision. The protein is UvrABC system protein C of Rickettsia canadensis (strain McKiel).